Here is a 235-residue protein sequence, read N- to C-terminus: Dual specificity protein phosphatase 15 (235 aa).

The N-myristoyl glycine moiety is linked to residue glycine 2. The Tyrosine-protein phosphatase domain maps to 4–144 (GMTKVLPGLY…LEEFGWANSQ (141 aa)). Cysteine 88 acts as the Phosphocysteine intermediate in catalysis. The span at 183 to 193 (AASATTASSAA) shows a compositional bias: low complexity. Positions 183-212 (AASATTASSAAEGTLQRLVPRSPRDSHQPL) are disordered.

It belongs to the protein-tyrosine phosphatase family. Non-receptor class dual specificity subfamily. Isoform 1 is expressed in testis; predominantly in developing spermatocytes (at protein level). Isoform 2 is highly expressed in testis. Expressed in spinal cord and specifically in oligodendroglial cells. Expressed in embryonic brain cortex; down-regulated in mice with experimental autoimmune encephalomyelitis (EAE).

It is found in the cell membrane. It carries out the reaction O-phospho-L-tyrosyl-[protein] + H2O = L-tyrosyl-[protein] + phosphate. The catalysed reaction is O-phospho-L-seryl-[protein] + H2O = L-seryl-[protein] + phosphate. The enzyme catalyses O-phospho-L-threonyl-[protein] + H2O = L-threonyl-[protein] + phosphate. Functionally, may dephosphorylate MAPK13, ATF2, ERBB3, PDGFRB and SNX6. Its function is as follows. May play a role in the regulation of oligodendrocyte differentiation. May play a role in the regulation of myelin formation. Involved in the regulation of Erk1/2 phosphorylation in Schwann cells; the signaling may be linked to the regulation of myelination. This Mus musculus (Mouse) protein is Dual specificity protein phosphatase 15.